Consider the following 206-residue polypeptide: Large ribosomal subunit protein uL4 (206 aa).

Residues 48-75 (TQSAKTRAEVSGGGIKPWRQKGTGRARQ) form a disordered region.

The protein belongs to the universal ribosomal protein uL4 family. In terms of assembly, part of the 50S ribosomal subunit.

One of the primary rRNA binding proteins, this protein initially binds near the 5'-end of the 23S rRNA. It is important during the early stages of 50S assembly. It makes multiple contacts with different domains of the 23S rRNA in the assembled 50S subunit and ribosome. In terms of biological role, forms part of the polypeptide exit tunnel. The protein is Large ribosomal subunit protein uL4 of Clostridium botulinum (strain Loch Maree / Type A3).